A 394-amino-acid polypeptide reads, in one-letter code: Maltose permease (394 aa).

The Cytoplasmic portion of the chain corresponds to 1 to 11 (MGAAFKWGAAA). The chain crosses the membrane as a helical span at residues 12-38 (RKTVFPLFYFLIFFAFGALFPLLSVYL). At 39–45 (QEEARLS) the chain is on the extracellular side. Residues 46 to 74 (GAAIGWIMSLPPIVTMAAQPLWGTAADYT) form a helical membrane-spanning segment. The Cytoplasmic segment spans residues 75-78 (RKPV). A helical membrane pass occupies residues 79–104 (GLLLAALVLAALFGVMYALAGSYRLF). Residues 105 to 108 (VVLT) lie on the Extracellular side of the membrane. Residues 109-126 (VLLSAMQSAIVPLSDSLA) traverse the membrane as a helical segment. At 127–137 (LRHVHEQGGNY) the chain is on the cytoplasmic side. Residues 138 to 160 (GAIRLWGSLGFAMAVLAVGWLSD) form a helical membrane-spanning segment. Topologically, residues 161-163 (HIA) are extracellular. Residues 164-183 (FAVIFYAFSLALLTAAALAT) traverse the membrane as a helical segment. At 184–213 (RLPRYPMGAPGALTRQDVRGLLASRPFRLL) the chain is on the cytoplasmic side. A helical membrane pass occupies residues 214–233 (LVATFLLFGPILANNSYFGL). Residues 234–237 (LIHE) are Extracellular-facing. A helical transmembrane segment spans residues 238-262 (LGGTLTGIGLAFLFAAGSEAPFMKA). The Cytoplasmic segment spans residues 263–272 (ADRLIGRFGM). Residues 273-292 (VRLLLLAALISAARWLAYAA) traverse the membrane as a helical segment. Residues 293–295 (DPP) are Extracellular-facing. Residues 296-318 (LWFVYMTTVVQGCSVGLAIPTAL) form a helical membrane-spanning segment. Over 319–330 (QYARRLAPERVQ) the chain is Cytoplasmic. A helical membrane pass occupies residues 331 to 358 (STAVALYSAVGNGLGAWFCTLVGGYLLE). Over 359-361 (RWQ) the chain is Extracellular. A helical transmembrane segment spans residues 362 to 382 (IGAVYLFFSICTIVGVLVLLL). Residues 383-394 (LAKRERTAGEEK) are Cytoplasmic-facing.

Belongs to the major facilitator superfamily.

It is found in the cell membrane. Functionally, high affinity transport of maltose. This Geobacillus stearothermophilus (Bacillus stearothermophilus) protein is Maltose permease (malA).